The chain runs to 418 residues: Magnesium-chelatase subunit ChlI-2, chloroplastic (418 aa).

The transit peptide at 1-55 directs the protein to the chloroplast; sequence MASLLGRSPSSILTCPRISSPSSTSSMSHLCFGPEKLSGRIQFNPKKNRSRYHVS. Valine 56 carries the N-acetylvaline modification. Intrachain disulfides connect cysteine 96–cysteine 187 and cysteine 348–cysteine 390. 113 to 120 lines the ATP pocket; the sequence is GDRGTGKS.

Belongs to the Mg-chelatase subunits D/I family. The magnesium chelatase complex is a heterotrimer consisting of subunits CHLI, CHLD and CHLH. As to expression, expressed in leaves.

It localises to the plastid. It is found in the chloroplast. It catalyses the reaction protoporphyrin IX + Mg(2+) + ATP + H2O = Mg-protoporphyrin IX + ADP + phosphate + 3 H(+). It participates in porphyrin-containing compound metabolism; chlorophyll biosynthesis. Its activity is regulated as follows. Redox regulation; active in reducing conditions, inactive in oxidizing conditions. Thioredoxins f and m mediate the reversible reductive activation of oxidized CHLI2. Its function is as follows. Involved in chlorophyll biosynthesis. Catalyzes the insertion of magnesium ion into protoporphyrin IX to yield Mg-protoporphyrin IX. The reaction takes place in two steps, with an ATP-dependent activation followed by an ATP-dependent chelation step. Possesses low affinity for ATP and may play a limited role in chlorophyll biosynthesis, and contributes to the assembly of the Mg-chelatase complex. This is Magnesium-chelatase subunit ChlI-2, chloroplastic (CHLI2) from Arabidopsis thaliana (Mouse-ear cress).